Here is a 131-residue protein sequence, read N- to C-terminus: Arsenate reductase (131 aa).

Catalysis depends on nucleophile residues Cys-10, Cys-82, and Cys-89. Cystine bridges form between Cys-10-Cys-82 and Cys-82-Cys-89.

This sequence belongs to the low molecular weight phosphotyrosine protein phosphatase family. Thioredoxin-coupled ArsC subfamily.

It localises to the cytoplasm. It catalyses the reaction arsenate + [thioredoxin]-dithiol + H(+) = arsenite + [thioredoxin]-disulfide + H2O. Functionally, catalyzes the reduction of arsenate [As(V)] to arsenite [As(III)]. The sequence is that of Arsenate reductase from Staphylococcus aureus (strain bovine RF122 / ET3-1).